A 761-amino-acid polypeptide reads, in one-letter code: Zinc finger protein 287 (761 aa).

The region spanning 49–131 (RQNFRNFPYP…TLVEDLTQIL (83 aa)) is the SCAN box domain. A disordered region spans residues 134–154 (EAPQNSTLSQDTPEEDPRGKH). One can recognise a KRAB domain in the interval 170–238 (MTFKDVAVDI…IKEILEGPSP (69 aa)). 14 consecutive C2H2-type zinc fingers follow at residues 368-390 (YKCN…QSTH), 396-418 (YECE…QRMH), 424-446 (YECH…QRIH), 452-474 (YKCD…QRTH), 480-502 (YKCL…QRVH), 508-530 (YICN…QKIH), 536-558 (YKCN…QRIH), 564-586 (YKCN…QTTH), 592-614 (YICN…HRTH), 620-642 (YKCS…QRIH), 648-670 (FKCN…QRIH), 676-698 (YKCN…QRTH), 704-726 (YKCN…QRIH), and 732-754 (YACR…QRVH).

Belongs to the krueppel C2H2-type zinc-finger protein family.

It localises to the nucleus. Functionally, may be involved in transcriptional regulation. The protein is Zinc finger protein 287 of Homo sapiens (Human).